We begin with the raw amino-acid sequence, 600 residues long: MNHQKYIRNFSIIAHIDHGKSTLADRLIEHCGGLQAREMSQQVLDSMDIEKERGITIKAQTVRLVYKAKDGNNYYLNLMDTPGHVDFAYEVSRSLAACEGSLLVVDSTQGVEAQTLANVYQAIENDHEIVLVLNKLDLPASEPEQVKQQIEDIIGIDTSEAVLISAKSGIGIDLVLEAIVNKLPPPKESSSDILKALLVDSWYDPYLGVVILVRVIDGYLRKNMRIKMMATNSVYTVENVGYFTPKKHISDVLHAGEIGFFTAAIKQVADCKVGDTITDEKKPCEQALPGFKPNLPVVFCGLYPTDSSEFEHLKDSLAKLRLNDASFEYEMESSSALGVGFRCGFLGLLHLEIIQERLSREFDLDLITTAPSVVYKIHMRDGENLEIHNPADLPDLQKIESMEEPWIKATIMVPDEFLGAVLSLCTEKRGMQLDHSYIANRAKIIYKLPLNEIVYDFYDRLKSCSKGYASFEWQMDVYEPSELVKLGILVNAEVVDALSTIVHRSRAEQRGRALCVRLKDLIPRQQIDIAIQASIGSRIIARETIKALRKDVLSKCYGGDISRKRKLLEKQKAGKKRMRQYGNIEIPQSAFIAALKIGDE.

The 183-residue stretch at 5–187 folds into the tr-type G domain; sequence KYIRNFSIIA…AIVNKLPPPK (183 aa). GTP contacts are provided by residues 17–22 and 134–137; these read DHGKST and NKLD.

This sequence belongs to the TRAFAC class translation factor GTPase superfamily. Classic translation factor GTPase family. LepA subfamily.

The protein resides in the cell inner membrane. The catalysed reaction is GTP + H2O = GDP + phosphate + H(+). Its function is as follows. Required for accurate and efficient protein synthesis under certain stress conditions. May act as a fidelity factor of the translation reaction, by catalyzing a one-codon backward translocation of tRNAs on improperly translocated ribosomes. Back-translocation proceeds from a post-translocation (POST) complex to a pre-translocation (PRE) complex, thus giving elongation factor G a second chance to translocate the tRNAs correctly. Binds to ribosomes in a GTP-dependent manner. The sequence is that of Elongation factor 4 from Rickettsia conorii (strain ATCC VR-613 / Malish 7).